Reading from the N-terminus, the 411-residue chain is Argininosuccinate lyase (411 aa).

It belongs to the lyase 1 family. Argininosuccinate lyase subfamily.

It is found in the cytoplasm. The enzyme catalyses 2-(N(omega)-L-arginino)succinate = fumarate + L-arginine. It functions in the pathway amino-acid biosynthesis; L-arginine biosynthesis; L-arginine from L-ornithine and carbamoyl phosphate: step 3/3. The protein is Argininosuccinate lyase of Legionella pneumophila (strain Lens).